We begin with the raw amino-acid sequence, 83 residues long: Cytochrome b559 subunit alpha (83 aa).

A helical transmembrane segment spans residues Val21 to Trp35. Heme is bound at residue His23.

It belongs to the PsbE/PsbF family. As to quaternary structure, heterodimer of an alpha subunit and a beta subunit. PSII is composed of 1 copy each of membrane proteins PsbA, PsbB, PsbC, PsbD, PsbE, PsbF, PsbH, PsbI, PsbJ, PsbK, PsbL, PsbM, PsbT, PsbX, PsbY, PsbZ, Psb30/Ycf12, at least 3 peripheral proteins of the oxygen-evolving complex and a large number of cofactors. It forms dimeric complexes. The cofactor is heme b.

It is found in the plastid. It localises to the chloroplast thylakoid membrane. Functionally, this b-type cytochrome is tightly associated with the reaction center of photosystem II (PSII). PSII is a light-driven water:plastoquinone oxidoreductase that uses light energy to abstract electrons from H(2)O, generating O(2) and a proton gradient subsequently used for ATP formation. It consists of a core antenna complex that captures photons, and an electron transfer chain that converts photonic excitation into a charge separation. The chain is Cytochrome b559 subunit alpha from Amborella trichopoda.